A 278-amino-acid polypeptide reads, in one-letter code: UPF0276 protein Sama_1305 (278 aa).

This sequence belongs to the UPF0276 family.

The sequence is that of UPF0276 protein Sama_1305 from Shewanella amazonensis (strain ATCC BAA-1098 / SB2B).